The sequence spans 126 residues: Large ribosomal subunit protein bL12 (126 aa).

Belongs to the bacterial ribosomal protein bL12 family. In terms of assembly, homodimer. Part of the ribosomal stalk of the 50S ribosomal subunit. Forms a multimeric L10(L12)X complex, where L10 forms an elongated spine to which 2 to 4 L12 dimers bind in a sequential fashion. Binds GTP-bound translation factors.

Functionally, forms part of the ribosomal stalk which helps the ribosome interact with GTP-bound translation factors. Is thus essential for accurate translation. The protein is Large ribosomal subunit protein bL12 of Helicobacter hepaticus (strain ATCC 51449 / 3B1).